The chain runs to 127 residues: Flagellar hook-basal body complex protein FliE (127 aa).

Belongs to the FliE family.

It is found in the bacterial flagellum basal body. This Leptospira interrogans serogroup Icterohaemorrhagiae serovar copenhageni (strain Fiocruz L1-130) protein is Flagellar hook-basal body complex protein FliE.